A 130-amino-acid polypeptide reads, in one-letter code: MSMQDPIADMLTRIRNGQAANKVAVTMPSSKLKVAIAKVLKEEGYIEDYKIEGDTKPELELVLKYFQGKAVVESIQRVSRPSLRIYKKKDELPQVMAGLGIAVVSTSKGVMTDRAARQAGLGGEILCYVA.

The protein belongs to the universal ribosomal protein uS8 family. As to quaternary structure, part of the 30S ribosomal subunit. Contacts proteins S5 and S12.

Its function is as follows. One of the primary rRNA binding proteins, it binds directly to 16S rRNA central domain where it helps coordinate assembly of the platform of the 30S subunit. This chain is Small ribosomal subunit protein uS8, found in Photorhabdus laumondii subsp. laumondii (strain DSM 15139 / CIP 105565 / TT01) (Photorhabdus luminescens subsp. laumondii).